Consider the following 284-residue polypeptide: uncharacterized protein (284 aa).

The region spanning 25-123 (PILVMHGGHS…NTLTLQSAVT (99 aa)) is the AB hydrolase-1 domain. Residue S96 is part of the active site.

It belongs to the AB hydrolase superfamily.

This is an uncharacterized protein from Bacillus subtilis (strain 168).